An 88-amino-acid polypeptide reads, in one-letter code: Small ribosomal subunit protein bS16 (88 aa).

This sequence belongs to the bacterial ribosomal protein bS16 family.

The protein is Small ribosomal subunit protein bS16 of Baumannia cicadellinicola subsp. Homalodisca coagulata.